The following is a 297-amino-acid chain: Flavin-dependent thymidylate synthase (297 aa).

In terms of domain architecture, ThyX spans 41-251; the sequence is GFVRLVDYMG…PLTYAAFVEY (211 aa). FAD contacts are provided by residues Thr-87, 110 to 112, and Glu-118; that span reads RHR. Residues 107–110, 118–122, and Arg-190 each bind dUMP; these read QWVR and EYSAR. The short motif at 110–120 is the ThyX motif element; sequence RHRTANVNEYS. FAD contacts are provided by residues 206 to 208 and His-212; that span reads DLH. Arg-217 serves as a coordination point for dUMP. Arg-217 functions as the Involved in ionization of N3 of dUMP, leading to its activation in the catalytic mechanism.

Belongs to the thymidylate synthase ThyX family. In terms of assembly, homotetramer. FAD is required as a cofactor.

The enzyme catalyses dUMP + (6R)-5,10-methylene-5,6,7,8-tetrahydrofolate + NADPH + H(+) = dTMP + (6S)-5,6,7,8-tetrahydrofolate + NADP(+). It functions in the pathway pyrimidine metabolism; dTTP biosynthesis. Catalyzes the reductive methylation of 2'-deoxyuridine-5'-monophosphate (dUMP) to 2'-deoxythymidine-5'-monophosphate (dTMP) while utilizing 5,10-methylenetetrahydrofolate (mTHF) as the methyl donor, and NADPH and FADH(2) as the reductant. The sequence is that of Flavin-dependent thymidylate synthase from Ehrlichia ruminantium (strain Gardel).